The following is a 77-amino-acid chain: Tachyplesin-2 (77 aa).

Positions 1 to 23 (MKKLVIALCLMMVLAVMVEEAEA) are cleaved as a signal peptide. Cystine bridges form between Cys26–Cys39 and Cys30–Cys35. Arginine amide is present on Arg40. Residues 41–77 (GKRNEVRQYRDRGYDVRAIPDETFFTRQDEDEDDDEE) constitute a propeptide that is removed on maturation.

The protein belongs to the tachyplesin/polyphemusin family. In terms of tissue distribution, hemocytes.

It localises to the secreted. Functionally, significantly inhibits the growth of Gram-negative and Gram-positive bacteria. In Tachypleus tridentatus (Japanese horseshoe crab), this protein is Tachyplesin-2.